Consider the following 147-residue polypeptide: AP-2 complex subunit sigma (147 aa).

It belongs to the adaptor complexes small subunit family. In terms of assembly, adaptor protein complex 2 (AP-2) is a heterotetramer composed of two large adaptins (alpha-type subunit APL3 and beta-type subunit APL1), a medium chain (mu-type subunit APM4) and a small adaptin (sigma-type subunit APS2). Interacts with APL1.

The protein resides in the cell membrane. It is found in the membrane. Its subcellular location is the coated pit. Functionally, component of the adaptor complexes which link clathrin to receptors in coated vesicles. Clathrin-associated protein complexes are believed to interact with the cytoplasmic tails of membrane proteins, leading to their selection and concentration. The polypeptide is AP-2 complex subunit sigma (APS2) (Saccharomyces cerevisiae (strain ATCC 204508 / S288c) (Baker's yeast)).